The primary structure comprises 213 residues: dTTP/UTP pyrophosphatase (213 aa).

Asp92 acts as the Proton acceptor in catalysis.

The protein belongs to the Maf family. YhdE subfamily. It depends on a divalent metal cation as a cofactor.

It localises to the cytoplasm. It carries out the reaction dTTP + H2O = dTMP + diphosphate + H(+). It catalyses the reaction UTP + H2O = UMP + diphosphate + H(+). In terms of biological role, nucleoside triphosphate pyrophosphatase that hydrolyzes dTTP and UTP. May have a dual role in cell division arrest and in preventing the incorporation of modified nucleotides into cellular nucleic acids. The polypeptide is dTTP/UTP pyrophosphatase (Granulibacter bethesdensis (strain ATCC BAA-1260 / CGDNIH1)).